The primary structure comprises 380 residues: Chaperone protein DnaJ (380 aa).

Residues 5-69 (DYYEILGVSK…QKRAHYDQFG (65 aa)) enclose the J domain. The segment at 135–217 (GKETDIEIPR…CGGTGRVKKR (83 aa)) adopts a CR-type zinc-finger fold. Zn(2+) contacts are provided by Cys148, Cys151, Cys165, Cys168, Cys191, Cys194, Cys205, and Cys208. CXXCXGXG motif repeat units lie at residues 148-155 (CDTCHGTG), 165-172 (CSYCHGTG), 191-198 (CPYCGGTG), and 205-212 (CTTCGGTG).

Belongs to the DnaJ family. As to quaternary structure, homodimer. The cofactor is Zn(2+).

It is found in the cytoplasm. Functionally, participates actively in the response to hyperosmotic and heat shock by preventing the aggregation of stress-denatured proteins and by disaggregating proteins, also in an autonomous, DnaK-independent fashion. Unfolded proteins bind initially to DnaJ; upon interaction with the DnaJ-bound protein, DnaK hydrolyzes its bound ATP, resulting in the formation of a stable complex. GrpE releases ADP from DnaK; ATP binding to DnaK triggers the release of the substrate protein, thus completing the reaction cycle. Several rounds of ATP-dependent interactions between DnaJ, DnaK and GrpE are required for fully efficient folding. Also involved, together with DnaK and GrpE, in the DNA replication of plasmids through activation of initiation proteins. The chain is Chaperone protein DnaJ from Geobacillus sp. (strain WCH70).